The sequence spans 433 residues: Cell adhesion molecule 2 (433 aa).

The N-terminal stretch at 1 to 24 is a signal peptide; sequence MILQPSALLCLSSLWGVIVQASQG. Residues 25–365 are Extracellular-facing; sequence QFPVTQNVTV…ALPGPVATDH (341 aa). The 88-residue stretch at 27–114 folds into the Ig-like V-type domain; the sequence is PVTQNVTVVE…SLFTMPVKTS (88 aa). N-linked (GlcNAc...) asparagine glycans are attached at residues asparagine 31, asparagine 41, and asparagine 51. 3 disulfides stabilise this stretch: cysteine 44–cysteine 104, cysteine 146–cysteine 203, and cysteine 248–cysteine 296. 2 Ig-like C2-type domains span residues 127-217 and 227-312; these read PHIS…PQIA and PTVR…YVLI. N-linked (GlcNAc...) asparagine glycosylation is found at asparagine 287 and asparagine 291. The helical transmembrane segment at 366–386 threads the bilayer; sequence ALIGGVVAVVVFVTLCSIILI. The Cytoplasmic portion of the chain corresponds to 387–433; it reads GRYLARHKGTYLTNEAKGAEDAPDADTAIINAEGSQVNAEEKKEYFI.

This sequence belongs to the nectin family.

Its subcellular location is the membrane. The chain is Cell adhesion molecule 2 (cadm2) from Xenopus tropicalis (Western clawed frog).